The chain runs to 218 residues: Monomethylamine corrinoid protein 1 (218 aa).

The region spanning 1 to 91 (MANQEIFDKL…ELEKTKVEGE (91 aa)) is the B12-binding N-terminal domain. Residues 94 to 218 (TGLAITFVAE…AAKVALNIMK (125 aa)) enclose the B12-binding domain. His107 is a binding site for methylcob(III)alamin.

The protein belongs to the methylamine corrinoid protein family. Can form a complex with MtmB.

The protein operates within one-carbon metabolism; methanogenesis from methylamine. Acts as a methyl group carrier between MtmB and MtbA. In Methanosarcina acetivorans (strain ATCC 35395 / DSM 2834 / JCM 12185 / C2A), this protein is Monomethylamine corrinoid protein 1 (mtmC1).